Here is a 91-residue protein sequence, read N- to C-terminus: DNA-directed RNA polymerase subunit omega (91 aa).

It belongs to the RNA polymerase subunit omega family. The RNAP catalytic core consists of 2 alpha, 1 beta, 1 beta' and 1 omega subunit. When a sigma factor is associated with the core the holoenzyme is formed, which can initiate transcription.

The enzyme catalyses RNA(n) + a ribonucleoside 5'-triphosphate = RNA(n+1) + diphosphate. In terms of biological role, promotes RNA polymerase assembly. Latches the N- and C-terminal regions of the beta' subunit thereby facilitating its interaction with the beta and alpha subunits. The protein is DNA-directed RNA polymerase subunit omega of Pectobacterium carotovorum subsp. carotovorum (strain PC1).